Reading from the N-terminus, the 601-residue chain is Sulfite reductase [NADPH] flavoprotein alpha-component (601 aa).

Residues 64-202 (ITLISASQTG…AAQEWRARVV (139 aa)) form the Flavodoxin-like domain. FMN-binding positions include 70 to 75 (SQTGNA), 117 to 120 (STQG), and 153 to 162 (LGDTSYEFFC). Residues 236–450 (EAPLSASLAV…IEHNDNFRLP (215 aa)) enclose the FAD-binding FR-type domain. Residues Thr-324, Ala-358, 388-391 (RLYS), 406-408 (TVG), Tyr-412, and 421-424 (GGAS) each bind FAD. Residues 521–522 (SR), 527–531 (KIYVQ), and Asp-563 each bind NADP(+). An FAD-binding site is contributed by Tyr-601.

The protein belongs to the NADPH-dependent sulphite reductase flavoprotein subunit CysJ family. In the N-terminal section; belongs to the flavodoxin family. It in the C-terminal section; belongs to the flavoprotein pyridine nucleotide cytochrome reductase family. Alpha(8)-beta(8). The alpha component is a flavoprotein, the beta component is a hemoprotein. FAD serves as cofactor. Requires FMN as cofactor.

It carries out the reaction hydrogen sulfide + 3 NADP(+) + 3 H2O = sulfite + 3 NADPH + 4 H(+). It functions in the pathway sulfur metabolism; hydrogen sulfide biosynthesis; hydrogen sulfide from sulfite (NADPH route): step 1/1. In terms of biological role, component of the sulfite reductase complex that catalyzes the 6-electron reduction of sulfite to sulfide. This is one of several activities required for the biosynthesis of L-cysteine from sulfate. The flavoprotein component catalyzes the electron flow from NADPH -&gt; FAD -&gt; FMN to the hemoprotein component. This chain is Sulfite reductase [NADPH] flavoprotein alpha-component, found in Citrobacter koseri (strain ATCC BAA-895 / CDC 4225-83 / SGSC4696).